The sequence spans 41 residues: Large ribosomal subunit protein bL36 (41 aa).

It belongs to the bacterial ribosomal protein bL36 family.

The chain is Large ribosomal subunit protein bL36 from Gluconobacter oxydans (strain 621H) (Gluconobacter suboxydans).